Here is a 679-residue protein sequence, read N- to C-terminus: MTKNLLLELGLEELPAYVVTKSEMQLGEKVASFLKENRLSFESIQTFSTPRRLAVRVIGLAEKQEDLIEDFKGPSKKIALDENGEFSKAAQGFVRGKGLTTDAIEFRTIKGEEYVYVTKHENGKDAEEVLKDIPSVLSSLTFPVSMHWANHTFEYIRPVHTLTVLLDDNALDLDFLDIHSGQKSRGHRFLGKEVTIENANSYESDLKTVFVIVDPKERQQMILDQIKAIEIAENVAVDIDEDLLNEVLNLVEYPTAFMGTFDQKYLDVPEEVLVTSMKNHQRYFVVRDKNGHLLPNFISVRNGNSEYIENVIKGNEKVLVARLEDGEFFWKEDQKLNIEDLVAKLANVTFHEKIGSLSEHMARTKVIASHLAEKVGLSDQERQALDRASQIYKFDLLTGMVGEFDELQGIMGEKYALLAGESAMVATAIREHYLPNSAEGALPESKVGALLALADKLDTLLSFFSVDLIPSGSNDPYALRRATQGIVRILEAFGWNIPMDALVENCYQLPFESLTYTNKDQVMSFISARVDKMMGKAIPKDIRDAVLASTNYQVPQMLETAQALVSASQSQGYKTAVENLSRVFNLAEKAEQEPQINSDLFENDEEIALYKAIENLNLEGNAKEKVEQLFALNDVIVNFFDHTMVMVEDVNVKNNRLALLSSLVSKAQTLAQFNLLNSK.

It belongs to the class-II aminoacyl-tRNA synthetase family. Tetramer of two alpha and two beta subunits.

The protein resides in the cytoplasm. The catalysed reaction is tRNA(Gly) + glycine + ATP = glycyl-tRNA(Gly) + AMP + diphosphate. This Streptococcus uberis (strain ATCC BAA-854 / 0140J) protein is Glycine--tRNA ligase beta subunit.